Reading from the N-terminus, the 399-residue chain is Leu/Ile/Val-binding protein homolog 7 (399 aa).

The N-terminal stretch at 1 to 22 (MEKHLIALSVAALLAGAAPASA) is a signal peptide.

This sequence belongs to the leucine-binding protein family.

Component of an amino-acid transport system. The protein is Leu/Ile/Val-binding protein homolog 7 of Brucella melitensis biotype 1 (strain ATCC 23456 / CCUG 17765 / NCTC 10094 / 16M).